The chain runs to 553 residues: CTP synthase (553 aa).

Residues 1 to 278 (MVRRTHGNSQ…DAYVVRELGL (278 aa)) are amidoligase domain. S25 contributes to the CTP binding site. Position 25 (S25) interacts with UTP. Residues 26-31 (SLGKGL) and D83 each bind ATP. Residues D83 and E152 each contribute to the Mg(2+) site. CTP is bound by residues 159-161 (DIE), 199-204 (KTKPTQ), and K235. Residues 199–204 (KTKPTQ) and K235 contribute to the UTP site. Residues 303–552 (NIAIVGKYID…VKAALDHQAA (250 aa)) enclose the Glutamine amidotransferase type-1 domain. L-glutamine is bound at residue G366. Residue C393 is the Nucleophile; for glutamine hydrolysis of the active site. L-glutamine is bound by residues 394-397 (LGLQ), E417, and R478. Residues H525 and E527 contribute to the active site.

Belongs to the CTP synthase family. In terms of assembly, homotetramer.

It carries out the reaction UTP + L-glutamine + ATP + H2O = CTP + L-glutamate + ADP + phosphate + 2 H(+). It catalyses the reaction L-glutamine + H2O = L-glutamate + NH4(+). The enzyme catalyses UTP + NH4(+) + ATP = CTP + ADP + phosphate + 2 H(+). It participates in pyrimidine metabolism; CTP biosynthesis via de novo pathway; CTP from UDP: step 2/2. Its activity is regulated as follows. Allosterically activated by GTP, when glutamine is the substrate; GTP has no effect on the reaction when ammonia is the substrate. The allosteric effector GTP functions by stabilizing the protein conformation that binds the tetrahedral intermediate(s) formed during glutamine hydrolysis. Inhibited by the product CTP, via allosteric rather than competitive inhibition. Catalyzes the ATP-dependent amination of UTP to CTP with either L-glutamine or ammonia as the source of nitrogen. Regulates intracellular CTP levels through interactions with the four ribonucleotide triphosphates. The chain is CTP synthase from Bifidobacterium longum (strain NCC 2705).